We begin with the raw amino-acid sequence, 252 residues long: MSQAAKASASATVAVNPGPDTKGKGAPPAGTSPSPGTTLAPTTVPITSAKAAELPPGNYRLVVFELENFQGRRAEFSGECSNLADRGFDRVRSIIVSAGPWVAFEQSNFRGEMFILEKGEYPRWNTWSSSYRSDRLMSFRPIKMDAQEHKISLFEGANFKGNTIEIQGDDAPSLWVYGFSDRVGSVKVSSGTWVGYQYPGYRGYQYLLEPGDFRHWNEWGAFQPQMQSLRRLRDKQWHLEGSFPVLATEPPK.

2 stretches are compositionally biased toward low complexity: residues 1–15 (MSQA…TVAV) and 24–37 (KGAP…SPGT). Residues 1-42 (MSQAAKASASATVAVNPGPDTKGKGAPPAGTSPSPGTTLAPT) form a disordered region. An N-acetylserine modification is found at serine 2. An N-terminal arm region spans residues 2–58 (SQAAKASASATVAVNPGPDTKGKGAPPAGTSPSPGTTLAPTTVPITSAKAAELPPGN). 2 consecutive Beta/gamma crystallin 'Greek key' domains span residues 59–98 (YRLV…IVSA) and 99–143 (GPWV…RPIK). The interval 144 to 148 (MDAQE) is connecting peptide. 2 Beta/gamma crystallin 'Greek key' domains span residues 149–190 (HKIS…KVSS) and 191–233 (GTWV…RRLR). The tract at residues 235–252 (KQWHLEGSFPVLATEPPK) is C-terminal arm.

This sequence belongs to the beta/gamma-crystallin family. As to quaternary structure, homo/heterodimer, or complexes of higher-order. The structure of beta-crystallin oligomers seems to be stabilized through interactions between the N-terminal arms. Specific cleavages in the N-terminal arm occur during lens maturation and give rise to truncated forms, leading to impaired oligomerization and protein insolubilization.

Its function is as follows. Crystallins are the dominant structural components of the vertebrate eye lens. This Homo sapiens (Human) protein is Beta-crystallin B1 (CRYBB1).